The following is a 296-amino-acid chain: Glycine--tRNA ligase alpha subunit (296 aa).

The protein belongs to the class-II aminoacyl-tRNA synthetase family. Tetramer of two alpha and two beta subunits.

It localises to the cytoplasm. It catalyses the reaction tRNA(Gly) + glycine + ATP = glycyl-tRNA(Gly) + AMP + diphosphate. The chain is Glycine--tRNA ligase alpha subunit from Listeria welshimeri serovar 6b (strain ATCC 35897 / DSM 20650 / CCUG 15529 / CIP 8149 / NCTC 11857 / SLCC 5334 / V8).